A 416-amino-acid polypeptide reads, in one-letter code: MSLVIIGINHKTATVDLREKVAFSPDRIHDAMKSLASRTRTGEAVIVSTCNRTELYCNNAEKEDIIEWLEDYHGLDHNDLMPCIYAYEEQVAVKHLMRVASGLDSLVLGEPQILGQVKQAFVKAKEAGTIALTIDRLFQNTFSVAKKVRTDTEIGAAAVSVAFAAVSMAKHIFSSLSTTKVLLIGAGETIELVAKHLKDNGVASMVVANRTIERAQAMCEEFNATAITLEQIPDFLPKADIVISSTASPLPILGKGMVEKALKQRRHQPMLLVDIAVPRDIEAEVGELDDAFLYTVDDLHSIIEQNMASRKEAAEQAELITEDQSHIFMEWIRSLESVDSIREYRSQSLAIKDELVERALNKLSQGSDSEQVILELANRLTNRLIHSPTQALTSASRQGDLNTLGQLRSALGLDKN.

Residues 49–52 (TCNR), Ser105, 110–112 (EPQ), and Gln116 contribute to the substrate site. Cys50 serves as the catalytic Nucleophile. 185 to 190 (GAGETI) is a binding site for NADP(+).

The protein belongs to the glutamyl-tRNA reductase family. As to quaternary structure, homodimer.

The catalysed reaction is (S)-4-amino-5-oxopentanoate + tRNA(Glu) + NADP(+) = L-glutamyl-tRNA(Glu) + NADPH + H(+). It participates in porphyrin-containing compound metabolism; protoporphyrin-IX biosynthesis; 5-aminolevulinate from L-glutamyl-tRNA(Glu): step 1/2. Catalyzes the NADPH-dependent reduction of glutamyl-tRNA(Glu) to glutamate 1-semialdehyde (GSA). The chain is Glutamyl-tRNA reductase from Shewanella frigidimarina (strain NCIMB 400).